We begin with the raw amino-acid sequence, 302 residues long: Glutaminase (302 aa).

Positions 61, 111, 155, 162, 186, 238, and 256 each coordinate substrate.

This sequence belongs to the glutaminase family. Homotetramer.

It carries out the reaction L-glutamine + H2O = L-glutamate + NH4(+). The protein is Glutaminase of Pseudomonas fluorescens (strain SBW25).